Reading from the N-terminus, the 1235-residue chain is ATP-dependent helicase/nuclease subunit A (1235 aa).

Positions 3–471 (TKWTETQKSA…IKLSENFRSR (469 aa)) constitute a UvrD-like helicase ATP-binding domain. 24–31 (AGAGTGKT) is a binding site for ATP. In terms of domain architecture, UvrD-like helicase C-terminal spans 509 to 808 (PFEGNCGGDV…RIMSIHKSKG (300 aa)).

This sequence belongs to the helicase family. AddA subfamily. As to quaternary structure, heterodimer of AddA and AddB/RexB. Mg(2+) serves as cofactor.

The catalysed reaction is Couples ATP hydrolysis with the unwinding of duplex DNA by translocating in the 3'-5' direction.. It carries out the reaction ATP + H2O = ADP + phosphate + H(+). In terms of biological role, the heterodimer acts as both an ATP-dependent DNA helicase and an ATP-dependent, dual-direction single-stranded exonuclease. Recognizes the chi site generating a DNA molecule suitable for the initiation of homologous recombination. The AddA nuclease domain is required for chi fragment generation; this subunit has the helicase and 3' -&gt; 5' nuclease activities. The polypeptide is ATP-dependent helicase/nuclease subunit A (Clostridium kluyveri (strain ATCC 8527 / DSM 555 / NBRC 12016 / NCIMB 10680 / K1)).